A 109-amino-acid chain; its full sequence is Parvalbumin beta-1 (109 aa).

The residue at position 2 (Ser2) is an N-acetylserine. EF-hand domains are found at residues 39–74 (KSHE…FGAG) and 78–109 (LTAA…LVKA). The Ca(2+) site is built by Asp52, Asp54, Ser56, Phe58, Glu60, Glu63, Asp91, Asp93, Asp95, Met97, and Glu102.

This sequence belongs to the parvalbumin family.

In muscle, parvalbumin is thought to be involved in relaxation after contraction. It binds two calcium ions. In Gadus chalcogrammus (Alaska pollock), this protein is Parvalbumin beta-1.